A 727-amino-acid chain; its full sequence is MKLLLFAAWFSSLLDPCRFLDICQSCHPNADCDDICKCRTGYTGNGISDCRDDNECETVPEICGLHANCTNYVGGYYCNCLSGFISNGTEQFQTNDGTSCNDINECEEDRKCGPNSKCHNNIGSFICSCLRGYTSPAGPWFMPNHGTDCIENSKIHCHQDHKCTKETVNSTLERMTNLSISERLKEIRYQTSAALSPVLLISYIEAMVSSKLNSGDVSKDSKEHVNETITNLVFSVNNLVEKDEKVEWKKINEDLRMYYVTKLLHTAEKETLALSAGYTHATQMQVHAGDVEMKLYTFEPRQAQKHPLSANIQGNSISLSTKKARHANNNGSTSVVFLIYHSIGDLLKPADDPGVADYSRYAAAGEITVNSPVIAAAISNQKTLPLNDVTFTLKHTQEIDPARDETKCAFWEYSPSMMGHWSLDGCIRTRVNTTHTSCSCNHLTHFAILMSSARANLLAHYNVLTRITQLGMVISLICLSMCIFTFWFFRDIQNTRTTIHKNLCCSLFMAQFIFLIGINKSAHKWFCSLIAGLLHYFFLAAFAWMCIEGIHLYLIVVGVIYNKGFLHRNFYAFGYGSPAVVVAISATLGYKYYGTSSVCWLSTENNFIWSFIGPAILIILVNLLAFAVIIYKVYRHTAVKKPEISHYENIRSCARGAIALLFVLGVTWAFGVMYILYETTLTAYLFTFANVFQGMFIFIFLCVLSRRIQEEYYRLFKNMPCCFECLR.

A signal peptide spans Met-1–Phe-19. Over Leu-20–Ile-467 the chain is Extracellular. Residues Asp-52–Glu-90 enclose the EGF-like 1; calcium-binding domain. Cystine bridges form between Cys-56/Cys-69, Cys-63/Cys-78, Cys-106/Cys-118, Cys-112/Cys-127, Cys-408/Cys-438, and Cys-426/Cys-440. The 38-residue stretch at Asp-102–Pro-139 folds into the EGF-like 2; calcium-binding domain. In terms of domain architecture, GAIN-B spans Thr-282–Asn-456. The GPS stretch occupies residues Cys-408 to Asn-456. Residues Thr-468–Phe-488 form a helical membrane-spanning segment. Over Phe-489 to Arg-496 the chain is Cytoplasmic. The helical transmembrane segment at Thr-497–Gly-517 threads the bilayer. The Extracellular segment spans residues Ile-518 to His-535. A helical transmembrane segment spans residues Tyr-536 to Val-556. At Val-557–Arg-568 the chain is on the cytoplasmic side. A helical membrane pass occupies residues Asn-569–Gly-589. The Extracellular segment spans residues Tyr-590–Trp-609. Residues Ser-610–Ile-630 traverse the membrane as a helical segment. Residues Tyr-631 to Ala-654 lie on the Cytoplasmic side of the membrane. A helical membrane pass occupies residues Arg-655–Ile-675. At Leu-676–Thr-682 the chain is on the extracellular side. Residues Ala-683–Val-703 form a helical membrane-spanning segment.

It belongs to the G-protein coupled receptor 2 family. Adhesion G-protein coupled receptor (ADGR) subfamily. As to quaternary structure, heterodimer of 2 chains generated by proteolytic processing; the large extracellular N-terminal fragment and the membrane-bound C-terminal fragment predominantly remain associated and non-covalently linked. Autoproteolytically processed at the GPS region of the GAIN-B domain; this cleavage modulates receptor activity.

The protein localises to the cell membrane. Orphan receptor that plays a role in vessel formation. The polypeptide is Adhesion G protein-coupled receptor L4 (Danio rerio (Zebrafish)).